The primary structure comprises 94 residues: Integration host factor subunit beta (94 aa).

It belongs to the bacterial histone-like protein family. Heterodimer of an alpha and a beta chain.

This protein is one of the two subunits of integration host factor, a specific DNA-binding protein that functions in genetic recombination as well as in transcriptional and translational control. This is Integration host factor subunit beta from Yersinia enterocolitica serotype O:8 / biotype 1B (strain NCTC 13174 / 8081).